Reading from the N-terminus, the 155-residue chain is Small ribosomal subunit protein bS6 (155 aa).

The span at 115–137 (EADAAKAEADAARVEAEAKKAET) shows a compositional bias: basic and acidic residues. Residues 115-155 (EADAAKAEADAARVEAEAKKAETDETDETVDAETPENEEEN) form a disordered region. Residues 138 to 155 (DETDETVDAETPENEEEN) are compositionally biased toward acidic residues.

It belongs to the bacterial ribosomal protein bS6 family.

Binds together with bS18 to 16S ribosomal RNA. The chain is Small ribosomal subunit protein bS6 from Desulforapulum autotrophicum (strain ATCC 43914 / DSM 3382 / VKM B-1955 / HRM2) (Desulfobacterium autotrophicum).